The chain runs to 378 residues: Putative odorant receptor 71a (378 aa).

Residues 1 to 37 (MDYDRIRPVRFLTGVLKWWRLWPRKESVSTPDWTNWQ) are Cytoplasmic-facing. The helical transmembrane segment at 38-58 (AYALHVPFTFLFVLLLWLEAI) threads the bilayer. Residues 59–66 (KSRDIQHT) lie on the Extracellular side of the membrane. The chain crosses the membrane as a helical span at residues 67–87 (ADVLLICLTTTALGGKVINIW). Topologically, residues 88-127 (KYAHVAQGILSEWSTWDLFELRSKQEVDMWRFEHRRFNRV) are cytoplasmic. The chain crosses the membrane as a helical span at residues 128–148 (FMFYCLCSAGVIPFIVIQPLF). At 149 to 166 (DIPNRLPFWMWTPFDWQQ) the chain is on the extracellular side. Residues 167 to 187 (PVLFWYAFIYQATTIPIACAC) form a helical membrane-spanning segment. Residues 188-255 (NVTMDAVNWY…IFISKSTFTQ (68 aa)) lie on the Cytoplasmic side of the membrane. Residues 256-276 (ILVSSLIICFTIYSMQMSPVL) traverse the membrane as a helical segment. The Extracellular portion of the chain corresponds to 277-280 (QDLP). A helical transmembrane segment spans residues 281 to 301 (GFAAMMQYLVAMIMQVMLPTI). At 302–343 (YGNAVIDSANMLTDSMYNSDWPDMNCRMRRLVLMFMVYLNRP) the chain is on the cytoplasmic side. The helical transmembrane segment at 344 to 364 (VTLKAGGFFHIGLPLFTKTMN) threads the bilayer. Residues 365-378 (QAYSLLALLLNMNQ) lie on the Extracellular side of the membrane.

The protein belongs to the insect chemoreceptor superfamily. Heteromeric odorant receptor channel (TC 1.A.69) family. Or2a subfamily. In terms of assembly, interacts with Orco. Complexes exist early in the endomembrane system in olfactory sensory neurons (OSNs), coupling these complexes to the conserved ciliary trafficking pathway. Expressed in olfactory sensory neurons in the maxillary palp.

It is found in the cell membrane. Its function is as follows. Odorant receptor which mediates acceptance or avoidance behavior, depending on its substrates. The odorant receptor repertoire encodes a large collection of odor stimuli that vary widely in identity, intensity, and duration. May form a complex with Orco to form odorant-sensing units, providing sensitive and prolonged odorant signaling and calcium permeability. In Drosophila melanogaster (Fruit fly), this protein is Putative odorant receptor 71a (Or71a).